Reading from the N-terminus, the 564-residue chain is Asparagine synthetase domain-containing protein CG17486 (564 aa).

Cysteine 2 acts as the Nucleophile in catalysis. In terms of domain architecture, Glutamine amidotransferase type-2 spans 2-180 (CGIFCSVVNN…PLGLFRVKLN (179 aa)). The 262-residue stretch at 280–541 (PFCRLCMQKL…GLRDVVFLKK (262 aa)) folds into the Asparagine synthetase domain.

The polypeptide is Asparagine synthetase domain-containing protein CG17486 (Drosophila melanogaster (Fruit fly)).